Consider the following 311-residue polypeptide: Systemic RNA interference defective protein 2 (311 aa).

Positions 1 to 20 (MPRFVYFCFALIALLPISWT) are cleaved as a signal peptide. The Extracellular segment spans residues 21–188 (MDGILITDVE…EETKTVVNKN (168 aa)). The helical transmembrane segment at 189-209 (GGAVAVAVIEGIALIAILAFL) threads the bilayer. Over 210-311 (GYRTMVNHKL…NDPFATLESW (102 aa)) the chain is Cytoplasmic. The segment covering 287-301 (NSSAAQPSTTSNGQF) has biased composition (polar residues). The disordered stretch occupies residues 287 to 311 (NSSAAQPSTTSNGQFNDPFATLESW).

Expressed in the intestinal lumen. Also present, at lower levels, in the excretory duct cells.

The protein localises to the apical cell membrane. It is found in the cytoplasm. In terms of biological role, plays a role in RNA-mediated gene silencing by mediating endocytic uptake of double-stranded RNA (dsRNA) ingested from the environment into intestinal cells from the intestinal lumen. Selective for dsRNAs of at least 50 bp. Required for avoidance behavior induced by small RNAs derived from pathogenic bacteria such as P.aeruginosa. This Caenorhabditis elegans protein is Systemic RNA interference defective protein 2.